A 305-amino-acid polypeptide reads, in one-letter code: GMP synthase [glutamine-hydrolyzing] subunit B (305 aa).

Residues 2 to 184 (VKPEKFIPKA…LKLPDEICER (183 aa)) form the GMPS ATP-PPase domain. 29–35 (SGGVDSS) provides a ligand contact to ATP.

As to quaternary structure, heterodimer composed of a glutamine amidotransferase subunit (A) and a GMP-binding subunit (B).

The catalysed reaction is XMP + L-glutamine + ATP + H2O = GMP + L-glutamate + AMP + diphosphate + 2 H(+). The protein operates within purine metabolism; GMP biosynthesis; GMP from XMP (L-Gln route): step 1/1. Catalyzes the synthesis of GMP from XMP. This Methanosarcina barkeri (strain Fusaro / DSM 804) protein is GMP synthase [glutamine-hydrolyzing] subunit B.